Here is a 527-residue protein sequence, read N- to C-terminus: MNRRALISVSDKTGVVDFARGLADLGFEIVSTGGTYQTIKAAGVPVTYVTEITGFPEILDGRVKTLHPKVHGGILARRTPEHLAQLEAHAIVPIDVVAVNLYPFRETVAKPGVTREEAVENIDIGGPAMVRASAKNHESVAIIVNPDRYATVLAELQQNGVVSEATRRALAREAFAHTAEYDAAIAAYLAAEAGDDDPFAGIFAPGKVEKVQDLRYGENPHQKAAFYRERGYRGAGAGTAKQRWGKELSFNNLLDLNAALELVREFDRPAAAIIKHNNPCGVAVAATLKEAYEKAFAADPVSAFGGIIAFNVAVDADTANEVVKTFMEAVIAPSFDEAALEILQQKKGLRIMETGPLADSAPATADVKKIRGGFLVQEADLGDVTAEQIQVVTERAPEEGELADLLFAWKVVKHVKSNAIVIAKDGVAIGVGAGQMNRVGSAQIALEQAKASRAFGGDSVDHNNPAQGAVLASDAFLPFKDTVETAARYGIRAIIQPGGSVRDAESIEACNRLGVAMVFTGMRHFKH.

In terms of domain architecture, MGS-like spans 1–144 (MNRRALISVS…KNHESVAIIV (144 aa)).

The protein belongs to the PurH family.

The catalysed reaction is (6R)-10-formyltetrahydrofolate + 5-amino-1-(5-phospho-beta-D-ribosyl)imidazole-4-carboxamide = 5-formamido-1-(5-phospho-D-ribosyl)imidazole-4-carboxamide + (6S)-5,6,7,8-tetrahydrofolate. It carries out the reaction IMP + H2O = 5-formamido-1-(5-phospho-D-ribosyl)imidazole-4-carboxamide. It functions in the pathway purine metabolism; IMP biosynthesis via de novo pathway; 5-formamido-1-(5-phospho-D-ribosyl)imidazole-4-carboxamide from 5-amino-1-(5-phospho-D-ribosyl)imidazole-4-carboxamide (10-formyl THF route): step 1/1. It participates in purine metabolism; IMP biosynthesis via de novo pathway; IMP from 5-formamido-1-(5-phospho-D-ribosyl)imidazole-4-carboxamide: step 1/1. The chain is Bifunctional purine biosynthesis protein PurH from Heliobacterium modesticaldum (strain ATCC 51547 / Ice1).